The following is a 140-amino-acid chain: Protein S40-1 (140 aa).

Residues Tyr-16–Ser-58 are disordered. A compositionally biased stretch (basic and acidic residues) spans Arg-20–Trp-44.

Belongs to the senescence regulator S40 family.

It localises to the cytoplasm. This is Protein S40-1 from Arabidopsis thaliana (Mouse-ear cress).